The primary structure comprises 687 residues: Glycine--tRNA ligase beta subunit (687 aa).

It belongs to the class-II aminoacyl-tRNA synthetase family. As to quaternary structure, tetramer of two alpha and two beta subunits.

It localises to the cytoplasm. The enzyme catalyses tRNA(Gly) + glycine + ATP = glycyl-tRNA(Gly) + AMP + diphosphate. The protein is Glycine--tRNA ligase beta subunit of Citrifermentans bemidjiense (strain ATCC BAA-1014 / DSM 16622 / JCM 12645 / Bem) (Geobacter bemidjiensis).